Consider the following 242-residue polypeptide: Dehydration-responsive element-binding protein 1J (242 aa).

Over residues 20–29 (SSATTAATAT) the composition is skewed to low complexity. The interval 20–44 (SSATTAATATGPASPKRPAGRTKFQ) is disordered. The AP2/ERF DNA-binding region spans 50–109 (VFRGVRRRGRAGRWVCEVRVPGSRGDRLWVGTFDTAEEAARAHDAAMLAMCGASASLNFT). Residues 143 to 184 (FQRRGSTAATATATSGDAASTAPPSSSPVLSPNDDNASSAST) are disordered. Positions 148–184 (STAATATATSGDAASTAPPSSSPVLSPNDDNASSAST) are enriched in low complexity.

The protein belongs to the AP2/ERF transcription factor family. ERF subfamily.

The protein localises to the nucleus. In terms of biological role, transcriptional activator that binds specifically to the DNA sequence 5'-[AG]CCGAC-3'. Binding to the C-repeat/DRE element mediates high salinity- and dehydration-inducible transcription. This Oryza sativa subsp. indica (Rice) protein is Dehydration-responsive element-binding protein 1J (DREB1J).